The following is a 395-amino-acid chain: Elongation factor Tu (395 aa).

One can recognise a tr-type G domain in the interval 10–205; sequence KPHVNIGTIG…CDTWIPLPPR (196 aa). A G1 region spans residues 19–26; that stretch reads GHVDHGKT. Position 19 to 26 (19 to 26) interacts with GTP; the sequence is GHVDHGKT. Residue threonine 26 participates in Mg(2+) binding. The G2 stretch occupies residues 60-64; it reads GITIN. Residues 81 to 84 are G3; the sequence is DCPG. Residues 81–85 and 136–139 each bind GTP; these read DCPGH and NKCD. A G4 region spans residues 136–139; it reads NKCD. Residues 174–176 form a G5 region; the sequence is SAL.

This sequence belongs to the TRAFAC class translation factor GTPase superfamily. Classic translation factor GTPase family. EF-Tu/EF-1A subfamily. Monomer.

It localises to the cytoplasm. It carries out the reaction GTP + H2O = GDP + phosphate + H(+). GTP hydrolase that promotes the GTP-dependent binding of aminoacyl-tRNA to the A-site of ribosomes during protein biosynthesis. This chain is Elongation factor Tu, found in Parabacteroides distasonis (strain ATCC 8503 / DSM 20701 / CIP 104284 / JCM 5825 / NCTC 11152).